We begin with the raw amino-acid sequence, 306 residues long: Agmatinase (306 aa).

Mn(2+)-binding residues include His126, Asp149, His151, Asp153, Asp230, and Asp232.

This sequence belongs to the arginase family. Agmatinase subfamily. Mn(2+) serves as cofactor.

It catalyses the reaction agmatine + H2O = urea + putrescine. It participates in amine and polyamine biosynthesis; putrescine biosynthesis via agmatine pathway; putrescine from agmatine: step 1/1. In terms of biological role, catalyzes the formation of putrescine from agmatine. The polypeptide is Agmatinase (Citrobacter koseri (strain ATCC BAA-895 / CDC 4225-83 / SGSC4696)).